Here is a 178-residue protein sequence, read N- to C-terminus: Inorganic pyrophosphatase (178 aa).

3 residues coordinate substrate: Lys30, Arg44, and Tyr56. Asp66, Asp71, and Asp103 together coordinate Mg(2+). Tyr142 provides a ligand contact to substrate.

The protein belongs to the PPase family. In terms of assembly, homohexamer. Mg(2+) serves as cofactor.

It localises to the cytoplasm. The catalysed reaction is diphosphate + H2O = 2 phosphate + H(+). Catalyzes the hydrolysis of inorganic pyrophosphate (PPi) forming two phosphate ions. This is Inorganic pyrophosphatase from Bradyrhizobium diazoefficiens (strain JCM 10833 / BCRC 13528 / IAM 13628 / NBRC 14792 / USDA 110).